A 438-amino-acid polypeptide reads, in one-letter code: Aspartate aminotransferase, cytoplasmic (438 aa).

Residues Gly73, Trp167, and Asn220 each contribute to the L-aspartate site. N6-(pyridoxal phosphate)lysine is present on Lys284. Arg412 lines the L-aspartate pocket.

Belongs to the class-I pyridoxal-phosphate-dependent aminotransferase family. Homodimer. Requires pyridoxal 5'-phosphate as cofactor.

The protein resides in the cytoplasm. It catalyses the reaction L-aspartate + 2-oxoglutarate = oxaloacetate + L-glutamate. Its function is as follows. Plays a key role in amino acid metabolism. In Dictyostelium discoideum (Social amoeba), this protein is Aspartate aminotransferase, cytoplasmic (aatB).